We begin with the raw amino-acid sequence, 250 residues long: 7-cyano-7-deazaguanine synthase (250 aa).

21–31 (FSGGQDSSVCL) provides a ligand contact to ATP. Zn(2+)-binding residues include cysteine 209, cysteine 224, cysteine 227, and cysteine 230.

Belongs to the QueC family. It depends on Zn(2+) as a cofactor.

The enzyme catalyses 7-carboxy-7-deazaguanine + NH4(+) + ATP = 7-cyano-7-deazaguanine + ADP + phosphate + H2O + H(+). The protein operates within purine metabolism; 7-cyano-7-deazaguanine biosynthesis. Catalyzes the ATP-dependent conversion of 7-carboxy-7-deazaguanine (CDG) to 7-cyano-7-deazaguanine (preQ(0)). This chain is 7-cyano-7-deazaguanine synthase, found in Caulobacter sp. (strain K31).